A 398-amino-acid chain; its full sequence is Acetate kinase (398 aa).

Asparagine 7 contributes to the Mg(2+) binding site. Lysine 14 serves as a coordination point for ATP. Substrate is bound at residue arginine 90. Residue aspartate 147 is the Proton donor/acceptor of the active site. ATP-binding positions include 207 to 211, 282 to 284, and 330 to 334; these read HLGNG, DMR, and GIGEN. Mg(2+) is bound at residue glutamate 383.

This sequence belongs to the acetokinase family. In terms of assembly, homodimer. The cofactor is Mg(2+). Mn(2+) serves as cofactor.

The protein localises to the cytoplasm. The catalysed reaction is acetate + ATP = acetyl phosphate + ADP. It participates in metabolic intermediate biosynthesis; acetyl-CoA biosynthesis; acetyl-CoA from acetate: step 1/2. Its function is as follows. Catalyzes the formation of acetyl phosphate from acetate and ATP. Can also catalyze the reverse reaction. This Symbiobacterium thermophilum (strain DSM 24528 / JCM 14929 / IAM 14863 / T) protein is Acetate kinase.